The primary structure comprises 299 residues: Regucalcin (299 aa).

A divalent metal cation is bound at residue Glu18. Substrate contacts are provided by Arg101, Asn103, and Glu121. Lys144 carries the post-translational modification N6-succinyllysine. A divalent metal cation-binding residues include Asn154 and Asp204. The active-site Proton donor/acceptor is the Asp204. N6-succinyllysine occurs at positions 244 and 253.

Belongs to the SMP-30/CGR1 family. As to quaternary structure, monomer. Zn(2+) is required as a cofactor. Requires Mn(2+) as cofactor. It depends on Ca(2+) as a cofactor. The cofactor is Mg(2+).

Its subcellular location is the cytoplasm. It carries out the reaction D-glucono-1,5-lactone + H2O = D-gluconate + H(+). Its function is as follows. Gluconolactonase with low activity towards other sugar lactones, including gulonolactone and galactonolactone. Can also hydrolyze diisopropyl phosphorofluoridate and phenylacetate (in vitro). Calcium-binding protein. Modulates Ca(2+) signaling, and Ca(2+)-dependent cellular processes and enzyme activities. The chain is Regucalcin (RGN) from Homo sapiens (Human).